Consider the following 419-residue polypeptide: Zinc finger protein Pegasus (419 aa).

A Glycyl lysine isopeptide (Lys-Gly) (interchain with G-Cter in SUMO2) cross-link involves residue K5. A disordered region spans residues D36 to D55. C2H2-type zinc fingers lie at residues L82 to H104, H110 to H132, and Y138 to H161. K185 participates in a covalent cross-link: Glycyl lysine isopeptide (Lys-Gly) (interchain with G-Cter in SUMO2). The span at L262–A273 shows a compositional bias: polar residues. Disordered regions lie at residues L262–K284 and V297–P356. Over residues V297 to T311 the composition is skewed to low complexity. Positions S332 to S349 are enriched in polar residues. 2 C2H2-type zinc fingers span residues H364–H386 and F392–H416.

Belongs to the Ikaros C2H2-type zinc-finger protein family. Self-associates. Interacts with other family members; IKZF1, IKZF2, IKZF3 and IKZF4.

Its subcellular location is the nucleus. Functionally, transcriptional repressor that binds the core 5'GNNTGTNG-3' DNA consensus sequence. Involved in megakaryocyte differentiation. This chain is Zinc finger protein Pegasus (Ikzf5), found in Mus musculus (Mouse).